The following is a 179-amino-acid chain: Large ribosomal subunit protein uL5 (179 aa).

Belongs to the universal ribosomal protein uL5 family. In terms of assembly, part of the 50S ribosomal subunit; part of the 5S rRNA/L5/L18/L25 subcomplex. Contacts the 5S rRNA and the P site tRNA. Forms a bridge to the 30S subunit in the 70S ribosome.

Its function is as follows. This is one of the proteins that bind and probably mediate the attachment of the 5S RNA into the large ribosomal subunit, where it forms part of the central protuberance. In the 70S ribosome it contacts protein S13 of the 30S subunit (bridge B1b), connecting the 2 subunits; this bridge is implicated in subunit movement. Contacts the P site tRNA; the 5S rRNA and some of its associated proteins might help stabilize positioning of ribosome-bound tRNAs. This is Large ribosomal subunit protein uL5 from Aliivibrio salmonicida (strain LFI1238) (Vibrio salmonicida (strain LFI1238)).